A 972-amino-acid polypeptide reads, in one-letter code: Isoleucine--tRNA ligase (972 aa).

The 'HIGH' region motif lies at 63–73 (PYANGNIHIGH). E603 contacts L-isoleucyl-5'-AMP. The 'KMSKS' region signature appears at 644–648 (KMSKS). K647 lines the ATP pocket.

This sequence belongs to the class-I aminoacyl-tRNA synthetase family. IleS type 1 subfamily. Monomer.

It localises to the cytoplasm. It carries out the reaction tRNA(Ile) + L-isoleucine + ATP = L-isoleucyl-tRNA(Ile) + AMP + diphosphate. Its function is as follows. Catalyzes the attachment of isoleucine to tRNA(Ile). As IleRS can inadvertently accommodate and process structurally similar amino acids such as valine, to avoid such errors it has two additional distinct tRNA(Ile)-dependent editing activities. One activity is designated as 'pretransfer' editing and involves the hydrolysis of activated Val-AMP. The other activity is designated 'posttransfer' editing and involves deacylation of mischarged Val-tRNA(Ile). The chain is Isoleucine--tRNA ligase from Brucella suis biovar 1 (strain 1330).